We begin with the raw amino-acid sequence, 250 residues long: Thioesterase FPSE_09186 (250 aa).

Belongs to the AMT4 thioesterase family.

It functions in the pathway secondary metabolite biosynthesis. In terms of biological role, thioesterase; part of the gene cluster that mediates the biosynthesis of the lipopeptides W493 A and B. W493 A and B consist of six amino acid residues D-allo-thr, L-Ala, D-Ala, L-Gln, D-Tyr, and L-Val/L-Ile linked to a 3-hydroxy-4-methyltetradecanoic acid polyketide chain. The biosynthesis starts with formation of the linear polyketide chain by the highly reducing polyketide synthase PKS40. The gene cluster contains a putative acyl-CoA ligase (FPSE_09184) for formation of a CoA thioester polyketide. The thiol bond could be hydrolyzed by the putative thioesterase (FPSE_09186) and then accepted by the first T domain in module 1 of NRPS32. The second T domain is responsible for accepting a threonine, which is adenylated by the A domain and epimerized to the D-allo-threonine formed by the E domain. The five successive modules incorporate Ala, Ala, Gln, Tyr, and Val/Ile into the final product, which is released by cyclization. This is Thioesterase FPSE_09186 from Fusarium pseudograminearum (strain CS3096) (Wheat and barley crown-rot fungus).